A 239-amino-acid chain; its full sequence is Pyridoxine 5'-phosphate synthase (239 aa).

3-amino-2-oxopropyl phosphate is bound at residue asparagine 7. 9-10 (DH) is a binding site for 1-deoxy-D-xylulose 5-phosphate. A 3-amino-2-oxopropyl phosphate-binding site is contributed by arginine 18. Histidine 43 serves as the catalytic Proton acceptor. 1-deoxy-D-xylulose 5-phosphate contacts are provided by arginine 45 and histidine 50. The Proton acceptor role is filled by glutamate 70. Threonine 100 is a binding site for 1-deoxy-D-xylulose 5-phosphate. The Proton donor role is filled by histidine 192. Residues glycine 193 and 214 to 215 (GH) contribute to the 3-amino-2-oxopropyl phosphate site.

The protein belongs to the PNP synthase family. Homooctamer; tetramer of dimers.

Its subcellular location is the cytoplasm. The enzyme catalyses 3-amino-2-oxopropyl phosphate + 1-deoxy-D-xylulose 5-phosphate = pyridoxine 5'-phosphate + phosphate + 2 H2O + H(+). It participates in cofactor biosynthesis; pyridoxine 5'-phosphate biosynthesis; pyridoxine 5'-phosphate from D-erythrose 4-phosphate: step 5/5. Functionally, catalyzes the complicated ring closure reaction between the two acyclic compounds 1-deoxy-D-xylulose-5-phosphate (DXP) and 3-amino-2-oxopropyl phosphate (1-amino-acetone-3-phosphate or AAP) to form pyridoxine 5'-phosphate (PNP) and inorganic phosphate. In Pelagibacter ubique (strain HTCC1062), this protein is Pyridoxine 5'-phosphate synthase.